We begin with the raw amino-acid sequence, 7124 residues long: Replicase polyprotein 1ab (7124 aa).

A disordered region spans residues 25–45 (SEKLGSPERSEEDGFCPSAAQ). Residues 54–196 (LINHVRVDCS…PWSILLRKGG (143 aa)) form the CoV Nsp1 globular domain. The region spanning 217 to 247 (FNVEDACEEVHLNPKGKYSRKAYALLKGYRG) is the BetaCoV Nsp1 C-terminal domain. Residues 251–511 (ILFLDQYGCD…TDAICRSLYM (261 aa)) enclose the CoV Nsp2 N-terminal domain. Positions 390, 395, 411, and 414 each coordinate Zn(2+). The tract at residues 390–414 (CCGDACDFRGWVPGNMMDGFLCPGC) is C4. The CoV Nsp2 middle domain maps to 518–706 (CGNLEQRAIL…VDKFKVFFKV (189 aa)). A CoV Nsp2 C-terminal domain is found at 726–832 (SNRVCLAGCK…LDQCWRFPCA (107 aa)). Residues 834 to 946 (KKVEFNDKPK…MYCSFSAPDD (113 aa)) form the Ubiquitin-like 1 domain. Positions 1031-1268 (AFDAIYSEAL…IAQLYGSCIT (238 aa)) constitute a Peptidase C16 1 domain. Cys1068 functions as the For PL1-PRO activity in the catalytic mechanism. Residues Cys1145, Cys1148, Cys1171, and Cys1173 each contribute to the Zn(2+) site. Residues 1145-1173 (CLKCDMDLKLQGLDAMFFYGDVVSHVCKC) form a C4-type 1 zinc finger. Catalysis depends on for PL1-PRO activity residues His1219 and Asp1230. A Macro domain is found at 1269–1429 (PNVCFVKGDV…VIEKCQVTSI (161 aa)). In terms of domain architecture, DPUP spans 1484–1556 (DDARVFVQAH…VSQIRALLAN (73 aa)). Residues 1555–1610 (ANKVDVLCTVDGVNFRSCCVAEGEVFGKTLGSVFCDGINVTKVRCSAIHKGKVFFQ) form the Ubiquitin-like 2 domain. The Peptidase C16 2 domain maps to 1625–1884 (AFGFDEPQLL…CVEYNPDLSQ (260 aa)). The For PL2-PRO activity role is filled by Cys1663. Zn(2+)-binding residues include Cys1741, Cys1743, Cys1775, and Cys1777. The segment at 1741-1777 (CKCGVKQEQRKGVDAVMHFGTLDKGDLAKGYTIACTC) adopts a C4-type 2 zinc-finger fold. Catalysis depends on for PL2-PRO activity residues His1820 and Asp1834. In terms of domain architecture, Nucleic acid-binding spans 1898 to 1999 (IKAQFRTFEK…TYFNRPSVVC (102 aa)). The 150-residue stretch at 2053 to 2202 (QVVSGFLSDL…TDNKVIYTTE (150 aa)) folds into the G2M domain. 2 consecutive transmembrane segments (helical) span residues 2232–2252 (FFLV…NVIL) and 2260–2280 (IGFF…TFGI). The tract at residues 2232–2408 (FFLVATVFLL…FTLLRFYIVV (177 aa)) is HD1. The 3Ecto domain occupies 2268–2329 (GQIVAWVKTT…AINVVQHVVD (62 aa)). Disulfide bonds link Cys2284–Cys2308 and Cys2299–Cys2305. The next 2 membrane-spanning stretches (helical) occupy residues 2346–2366 (LVIG…LIGM) and 2388–2408 (FFVF…YIVV). Positions 2416–2506 (CLCRHVMYGC…ELKRPVNPTD (91 aa)) are Y1. A CoV Nsp3 Y domain is found at 2416-2783 (CLCRHVMYGC…LTTPFSLKGG (368 aa)). Zn(2+) contacts are provided by His2420, Cys2425, Cys2430, Cys2433, Cys2466, His2469, Cys2473, and Cys2476. Residues 2420 to 2433 (HVMYGCSRPGCLFC) are ZF1. Residues 2466 to 2476 (CAKHQWNCLNC) form a ZF2 region. A Y2 region spans residues 2507–2599 (SAYYLVTEVK…LVEKKLITTA (93 aa)). Residues 2507-2783 (SAYYLVTEVK…LTTPFSLKGG (277 aa)) form a coV-Y region. The interval 2600 to 2682 (NTGLSVSQTM…KSIMSAVNAG (83 aa)) is Y3. A Y4 region spans residues 2683–2783 (VDFTDESCNN…LTTPFSLKGG (101 aa)). 7 consecutive transmembrane segments (helical) span residues 2789 to 2809 (VLQW…ALMP), 2869 to 2889 (ACPV…FNVP), 3042 to 3062 (AFDL…FFAL), 3064 to 3084 (ASSV…YYLI), 3096 to 3116 (VVVI…VFQV), 3123 to 3143 (LYAC…SVVM), and 3148 to 3168 (LVMY…AVVV). Residues 2789–3168 (VLQWLFVVNL…FCIIYVAVVV (380 aa)) are HD2. The Nsp4C domain maps to 3182-3279 (LGTEVRSDGT…TASVTTSFLQ (98 aa)). The Peptidase C30 domain occupies 3280-3582 (SGIVKMVFPT…YQQLAGVKLQ (303 aa)). Residues His3320 and Cys3424 each act as for 3CL-PRO activity in the active site. The tract at residues 3525-3808 (LVLDALASMT…VCCCYWGVLS (284 aa)) is HD3. 7 helical membrane-spanning segments follow: residues 3591 to 3611 (GTCC…SAFV), 3621 to 3641 (THML…MLLV), 3647 to 3667 (YLTM…YLVV), 3690 to 3710 (TYMD…FVTM), 3717 to 3737 (VFSV…WYFG), 3744 to 3764 (VLLF…LSLA), and 3788 to 3808 (LVLL…GVLS). Residues 3870–3958 (SRLTDVKCVN…DYVRDSTVLQ (89 aa)) enclose the RdRp Nsp7 cofactor domain. The 197-residue stretch at 3959-4155 (ALQSEFVNMA…HNEVSSVVLQ (197 aa)) folds into the RdRp Nsp8 cofactor domain. Residues 4156–4265 (NNELMPQKLR…GTLSSTVRLQ (110 aa)) enclose the Nsp9 ssRNA-binding domain. The 138-residue stretch at 4266–4403 (AGTATEYASN…CVGTGSQFQS (138 aa)) folds into the ExoN/MTase coactivator domain. Zn(2+) is bound by residues Cys4339, Cys4342, His4348, Cys4355, Cys4381, Cys4384, Cys4392, and Cys4394. 2 zinc fingers span residues 4339–4355 (CIYC…DGLC) and 4381–4394 (CQVC…SCSC). Residues 4408-4663 (FLNRVRGTSV…DSELFINGTY (256 aa)) form the NiRAN domain. The Mn(2+) site is built by Asn4611 and Asp4620. The 99-residue stretch at 4664–4762 (REFDLVQYDF…MNMDVDTHRY (99 aa)) folds into the Nsp12 Interface domain. 5 residues coordinate Zn(2+): His4693, Cys4699, Cys4704, Cys4708, and Cys4885. The Nsp12 RNA-dependent RNA polymerase domain maps to 4763–5330 (RLSLKDLLLY…NMYLRSAVMQ (568 aa)). A rdRp Fingers N-ter region spans residues 4765-4979 (SLKDLLLYAA…HQKCLKSIAA (215 aa)). The interval 4980–5018 (TRGVPVVIGTTKFYGGWDDMLRRLIKDVDSPVLMGWDYP) is rdRp Palm N-ter. Residues 5010-5172 (PVLMGWDYPK…CYNSEFASKG (163 aa)) enclose the RdRp catalytic domain. The segment at 5019-5077 (KCDRAMPNILRIISSLVLARKHDSCCSHTDRFYRLANECAQVLSEIVMCGGCYYVKPGG) is rdRp Fingers C-ter. Residues His5040, Cys5043, and Cys5044 each contribute to the Zn(2+) site. The interval 5078-5213 (TSSGDATTAF…EKGPHEFCSQ (136 aa)) is rdRp Palm C-ter. Catalysis depends on residues Ser5157, Asp5158, and Asp5159. Residues 5214–5330 (HTMLVKMDGD…NMYLRSAVMQ (117 aa)) are rdRp Thumb. In terms of domain architecture, CV ZBD spans 5331-5443 (SVGACVVCSS…EDFNKIASCK (113 aa)). Positions 5335, 5338, 5346, 5349, 5356, 5359, 5363, 5369, 5380, 5385, 5402, and 5405 each coordinate Zn(2+). The 182-residue stretch at 5586–5767 (SVPETFQNNV…MCCLGPDIFL (182 aa)) folds into the (+)RNA virus helicase ATP-binding domain. 5611-5618 (GPPGTGKS) is an ATP binding site. The (+)RNA virus helicase C-terminal domain maps to 5768 to 5937 (GTCYRCPKEI…RLQCTTNLFK (170 aa)). In terms of domain architecture, ExoN spans 6001–6216 (LFITRDEAIR…RCLAVHDCFC (216 aa)). Residues Asp6019, Glu6021, and Glu6120 contribute to the active site. Residues Cys6136, Cys6139, Cys6155, His6158, His6186, Cys6190, and His6193 each coordinate Zn(2+). Catalysis depends on residues His6197 and Asp6202. Cys6208 is a Zn(2+) binding site. The 227-residue stretch at 6225 to 6451 (YPIISNEVSV…NLWNTFTRLQ (227 aa)) folds into the N7-MTase domain. Position 6260–6266 (6260–6266 (DIGNPKG)) interacts with S-adenosyl-L-methionine. Residues 6338–6352 (CNGGSLYVNKHAFHT) form a gpppA-binding region. Cys6376, Cys6397, Cys6408, and His6411 together coordinate Zn(2+). The Nsp15 N-terminal oligomerization domain occupies 6452–6512 (SLENVVYNLV…NVAVELFAKR (61 aa)). In terms of domain architecture, AV-Nsp11N/CoV-Nsp15M spans 6513–6633 (SIRPHPELKL…FAMRRDGDDV (121 aa)). The NendoU domain maps to 6683–6822 (APRSEMEKDF…NEEKVMTFYP (140 aa)). Active-site residues include His6713, His6728, Lys6768, Lys6871, Asp6955, Lys6995, and Glu7028. Residues 6827-7121 (AADWKPGYVM…KEVFVGDSLV (295 aa)) enclose the Nidovirus-type SAM-dependent 2'-O-MTase domain.

The protein belongs to the coronaviruses polyprotein 1ab family. Interacts with host PHB and PHB2. As to quaternary structure, interacts with papain-like protease nsp3 and non-structural protein 6. In terms of assembly, monomer. Homodimer. Only the homodimer shows catalytic activity. Interacts with nsp8 and nsp12 to form the replication-transcription complex (RTC): nsp12, nsp7, two subunits of nsp8, and up to two subunits of nsp13. As to quaternary structure, interacts with nsp7, nsp13 and nsp12 to form the replication-transcription complex (RTC): nsp12, nsp7, two subunits of nsp8, and up to two subunits of nsp13. In terms of assembly, interacts with nsp12. Interacts with proofreading exoribonuclease nsp14 and 2'-O-methyltransferase nsp16; these interactions enhance nsp14 and nsp16 enzymatic activities. As to quaternary structure, interacts with nsp7 and nsp8 to form the replication-transcription complex (RTC): nsp12, nsp7, two subunits of nsp8, and up to two subunits of nsp13. Interacts with nsp9. In terms of assembly, interacts with nsp8 to form the replication-transcription complex (RTC): nsp12, nsp7, two subunits of nsp8, and up to two subunits of nsp13. It depends on Mn(2+) as a cofactor. Mg(2+) serves as cofactor. Specific enzymatic cleavages in vivo by its own proteases yield mature proteins. 3CL-PRO and PL-PRO proteinases are autocatalytically processed.

It is found in the host membrane. The protein localises to the host cytoplasm. The protein resides in the host perinuclear region. Its subcellular location is the host endoplasmic reticulum-Golgi intermediate compartment. The catalysed reaction is RNA(n) + a ribonucleoside 5'-triphosphate = RNA(n+1) + diphosphate. The enzyme catalyses ATP + H2O = ADP + phosphate + H(+). It catalyses the reaction Thiol-dependent hydrolysis of ester, thioester, amide, peptide and isopeptide bonds formed by the C-terminal Gly of ubiquitin (a 76-residue protein attached to proteins as an intracellular targeting signal).. It carries out the reaction a 5'-end (N(7)-methyl 5'-triphosphoguanosine)-ribonucleoside in mRNA + S-adenosyl-L-methionine = a 5'-end (N(7)-methyl 5'-triphosphoguanosine)-(2'-O-methyl-ribonucleoside) in mRNA + S-adenosyl-L-homocysteine + H(+). The catalysed reaction is uridylyl-uridylyl-ribonucleotide-RNA = a 3'-end uridylyl-2',3'-cyclophospho-uridine-RNA + a 5'-end dephospho-ribonucleoside-RNA. The enzyme catalyses a 5'-end diphospho-ribonucleoside in mRNA + GTP + H(+) = a 5'-end (5'-triphosphoguanosine)-ribonucleoside in mRNA + diphosphate. It catalyses the reaction a 5'-end (5'-triphosphoguanosine)-ribonucleoside in mRNA + S-adenosyl-L-methionine = a 5'-end (N(7)-methyl 5'-triphosphoguanosine)-ribonucleoside in mRNA + S-adenosyl-L-homocysteine. The replicase polyprotein of coronaviruses is a multifunctional protein: it contains the activities necessary for the transcription of negative stranded RNA, leader RNA, subgenomic mRNAs and progeny virion RNA as well as proteinases responsible for the cleavage of the polyprotein into functional products. Functionally, inhibits host translation by interacting with the 40S ribosomal subunit. The nsp1-40S ribosome complex further induces an endonucleolytic cleavage near the 5'UTR of host mRNAs, targeting them for degradation. Viral mRNAs are not susceptible to nsp1-mediated endonucleolytic RNA cleavage thanks to the presence of a 5'-end leader sequence and are therefore protected from degradation. By suppressing host gene expression, nsp1 facilitates efficient viral gene expression in infected cells and evasion from host immune response. Its function is as follows. May play a role in the modulation of host cell survival signaling pathway by interacting with host PHB and PHB2. Indeed, these two proteins play a role in maintaining the functional integrity of the mitochondria and protecting cells from various stresses. In terms of biological role, responsible for the cleavages located at the N-terminus of the replicase polyprotein. In addition, PL-PRO possesses a deubiquitinating/deISGylating activity and processes both 'Lys-48'- and 'Lys-63'-linked polyubiquitin chains from cellular substrates. Participates together with nsp4 in the assembly of virally-induced cytoplasmic double-membrane vesicles necessary for viral replication. Antagonizes innate immune induction of type I interferon by blocking the phosphorylation, dimerization and subsequent nuclear translocation of host IRF3. Also prevents host NF-kappa-B signaling. Participates in the assembly of virally-induced cytoplasmic double-membrane vesicles necessary for viral replication. Functionally, cleaves the C-terminus of replicase polyprotein at 11 sites. Recognizes substrates containing the core sequence [ILMVF]-Q-|-[SGACN]. Also able to bind an ADP-ribose-1''-phosphate (ADRP). Its function is as follows. Plays a role in the initial induction of autophagosomes from host endoplasmic reticulum. Later, limits the expansion of these phagosomes that are no longer able to deliver viral components to lysosomes. In terms of biological role, forms a hexadecamer with nsp8 (8 subunits of each) that may participate in viral replication by acting as a primase. Alternatively, may synthesize substantially longer products than oligonucleotide primers. Forms a hexadecamer with nsp7 (8 subunits of each) that may participate in viral replication by acting as a primase. Alternatively, may synthesize substantially longer products than oligonucleotide primers. Functionally, forms a primer, NSP9-pU, which is utilized by the polymerase for the initiation of RNA chains. Interacts with ribosome signal recognition particle RNA (SRP). Together with NSP8, suppress protein integration into the cell membrane, thereby disrupting host immune defenses. Its function is as follows. Plays a pivotal role in viral transcription by stimulating both nsp14 3'-5' exoribonuclease and nsp16 2'-O-methyltransferase activities. Therefore plays an essential role in viral mRNAs cap methylation. In terms of biological role, RNA-directed RNA polymerase that catalyzes the transcription of viral genomic and subgenomic RNAs. Acts in complex with nsp7 and nsp8 to transcribe both the minus and positive strands of genomic RNA. The kinase-like NiRAN domain of NSP12 attaches one or more nucleotides to the amino terminus of NSP9, forming a covalent RNA-protein intermediate that serves as transcription/replication primer. Subgenomic RNAs (sgRNAs) are formed by discontinuous transcription: The polymerase has the ability to pause at transcription-regulating sequences (TRS) and jump to the leader TRS, resulting in a major deletion. This creates a series of subgenomic RNAs that are replicated, transcribed and translated. In addition, Nsp12 is a subunit of the viral RNA capping enzyme that catalyzes the RNA guanylyltransferase reaction for genomic and sub-genomic RNAs. Subsequently, the NiRAN domain transfers RNA to GDP, and forms the core cap structure GpppA-RNA. Multi-functional protein with a zinc-binding domain in N-terminus displaying RNA and DNA duplex-unwinding activities with 5' to 3' polarity. Activity of helicase is dependent on magnesium. Functionally, plays a role in viral RNA synthesis through two distinct activities. The N7-guanine methyltransferase activity plays a role in the formation of the cap structure GpppA-RNA. The proofreading exoribonuclease reduces the sensitivity of the virus to RNA mutagens during replication. This activity acts on both ssRNA and dsRNA in a 3'-5' direction. Its function is as follows. Plays a role in viral transcription/replication and prevents the simultaneous activation of host cell dsRNA sensors, such as MDA5/IFIH1, OAS, and PKR. Acts by degrading the 5'-polyuridines generated during replication of the poly(A) region of viral genomic and subgenomic RNAs. Catalyzes a two-step reaction in which a 2'3'-cyclic phosphate (2'3'-cP) is first generated by 2'-O transesterification, which is then hydrolyzed to a 3'-phosphate (3'-P). If not degraded, poly(U) RNA would hybridize with poly(A) RNA tails and activate host dsRNA sensors. In terms of biological role, methyltransferase that mediates mRNA cap 2'-O-ribose methylation to the 5'-cap structure of viral mRNAs. N7-methyl guanosine cap is a prerequisite for binding of nsp16. Therefore plays an essential role in viral mRNAs cap methylation which is essential to evade immune system. In Murine coronavirus (strain 2) (MHV-2), this protein is Replicase polyprotein 1ab (rep).